An 81-amino-acid polypeptide reads, in one-letter code: Large ribosomal subunit protein bL28 (81 aa).

The protein belongs to the bacterial ribosomal protein bL28 family. As to quaternary structure, part of the 50S ribosomal subunit.

The protein is Large ribosomal subunit protein bL28 of Deinococcus radiodurans (strain ATCC 13939 / DSM 20539 / JCM 16871 / CCUG 27074 / LMG 4051 / NBRC 15346 / NCIMB 9279 / VKM B-1422 / R1).